A 159-amino-acid polypeptide reads, in one-letter code: Voltage-dependent N-type calcium channel subunit alpha-1B (159 aa).

A helical membrane pass occupies residues 1 to 5; that stretch reads LVTEI. One copy of the IV repeat lies at 1–159; it reads LVTEIADTDN…LMLNLFVAVI (159 aa). At 6–13 the chain is on the extracellular side; the sequence is ADTDNFIN. A glycan (N-linked (GlcNAc...) asparagine) is linked at Asn-13. The chain crosses the membrane as a helical span at residues 14–32; it reads LSFLRLFRAARLIKLLRQG. The Cytoplasmic segment spans residues 33–51; it reads YTIRILLWTFVQSFKALPY. The chain crosses the membrane as a helical span at residues 52–71; the sequence is VCLLIAMLFFIYAIIGMQVF. The Extracellular portion of the chain corresponds to 72 to 135; it reads GNIALNDETS…LTKNECGSDF (64 aa). A helical transmembrane segment spans residues 136-155; it reads AYFYFVSFIFLCSFLMLNLF. At 156–159 the chain is on the cytoplasmic side; sequence VAVI.

This sequence belongs to the calcium channel alpha-1 subunit (TC 1.A.1.11) family. CACNA1B subfamily. Multisubunit complex consisting of alpha-1, alpha-2, beta and delta subunits in a 1:1:1:1 ratio. The channel activity is directed by the pore-forming and voltage-sensitive alpha-1 subunit. In many cases, this subunit is sufficient to generate voltage-sensitive calcium channel activity. The auxiliary subunits beta and alpha-2/delta linked by a disulfide bridge regulate the channel activity. Interacts with RIMBP2. Phosphorylated in vitro by CaM-kinase II, PKA, PKC and CGPK.

The protein localises to the membrane. The enzyme catalyses Ca(2+)(in) = Ca(2+)(out). In terms of biological role, voltage-sensitive calcium channels (VSCC) mediate the entry of calcium ions into excitable cells and are also involved in a variety of calcium-dependent processes, including muscle contraction, hormone or neurotransmitter release, gene expression, cell motility, cell division and cell death. This alpha-1B subunit gives rise to N-type calcium currents. N-type calcium channels belong to the 'high-voltage activated' (HVA) group. They are involved in pain signaling. Calcium channels containing alpha-1B subunit may play a role in directed migration of immature neurons. Mediates Ca(2+) release probability at hippocampal neuronal soma and synaptic terminals. This is Voltage-dependent N-type calcium channel subunit alpha-1B (CACNA1B) from Gallus gallus (Chicken).